The following is a 226-amino-acid chain: Chalcone--flavanone isomerase (226 aa).

Positions 47, 112, and 189 each coordinate substrate.

The protein belongs to the chalcone isomerase family.

The catalysed reaction is a chalcone = a flavanone.. Its pathway is secondary metabolite biosynthesis; flavonoid biosynthesis. Catalyzes the intramolecular cyclization of bicyclic chalcones into tricyclic (S)-flavanones. Responsible for the isomerization of 4,2',4',6'-tetrahydroxychalcone (also termed chalcone) into naringenin. This chain is Chalcone--flavanone isomerase (CHI), found in Allium cepa (Onion).